The chain runs to 321 residues: GDP-L-fucose synthase (321 aa).

14–20 is an NADP(+) binding site; the sequence is GGSGLVG. Tyr-143 serves as the catalytic Proton donor/acceptor. NADP(+) contacts are provided by residues Lys-147, 170–173, and His-186; that span reads PTNV. Residues Lys-194, Trp-208, Arg-215, and Asp-277 each coordinate substrate.

This sequence belongs to the NAD(P)-dependent epimerase/dehydratase family. Fucose synthase subfamily. Homodimer.

The enzyme catalyses GDP-beta-L-fucose + NADP(+) = GDP-4-dehydro-alpha-D-rhamnose + NADPH + H(+). It participates in nucleotide-sugar biosynthesis; GDP-L-fucose biosynthesis via de novo pathway; GDP-L-fucose from GDP-alpha-D-mannose: step 2/2. Functionally, catalyzes the two-step NADP-dependent conversion of GDP-4-dehydro-6-deoxy-D-mannose to GDP-fucose, involving an epimerase and a reductase reaction. This chain is GDP-L-fucose synthase, found in Homo sapiens (Human).